Reading from the N-terminus, the 500-residue chain is Zinc finger protein PLAG1 (500 aa).

Residues 1 to 30 (MATVIPGDLSEVRDTQKVPSGKRKRGETKP) are disordered. The tract at residues 2-84 (ATVIPGDLSE…SKYKLQRHMA (83 aa)) is interaction with KPNA2. The Nuclear localization signal motif lies at 22–25 (KRKR). 7 C2H2-type zinc fingers span residues 34–56 (FPCQLCDKAFNSVEKLKVHSYSH), 62–86 (YKCIQQDCTKAFVSKYKLQRHMATH), 92–114 (HKCNYCEKMFHRKDHLKNHLHTH), 121–143 (FKCEECGKNYNTKLGFKRHLALH), 150–172 (LTCKVCLQTFESTGVLLEHLKSH), 185–207 (HQCEHCDRRFYTRKDVRRHMVVH), and 213–236 (FLCQYCAQRFGRKDHLTRHMKKSH). A decreased nuclear import with localization in the nucleus but also in the cytoplasm region spans residues 41–242 (KAFNSVEKLK…KKSHNQELLK (202 aa)). A repression domain; contains 3 sumoylation motifs and massively decrease transcription activity region spans residues 243–384 (VKTEPVDFLD…QASSSSKLGL (142 aa)). The tract at residues 243–500 (VKTEPVDFLD…TLPRFHQAFQ (258 aa)) is activates transcription; Inhibition of nuclear import due to lack of NLS and KPNA2 interaction. Residues lysine 244 and lysine 263 each participate in a glycyl lysine isopeptide (Lys-Gly) (interchain with G-Cter in SUMO) cross-link. The tract at residues 365 to 388 (GGVPSSSQDSQASSSSKLGLDPQI) is disordered. Positions 369 to 380 (SSSQDSQASSSS) are enriched in low complexity. Positions 385–500 (DPQIGSLDDG…TLPRFHQAFQ (116 aa)) are massively activates transcription.

The protein belongs to the krueppel C2H2-type zinc-finger protein family. As to quaternary structure, interacts with KPNA2, which escorts protein to the nucleus via interaction with nuclear localization signal. Interacts with E3 SUMO-protein ligase PIAS1, PIAS2 and PIAS4. Sumoylated with SUMO1; which inhibits transcriptional activity, but does not affect nuclear localization. Blockers of sumoylation pathway such as SENP3 and inactive UBE2I increases transcriptional capacity. Sumoylation is increased in the presence of PIAS1. Post-translationally, acetylated by lysine acetyltransferase EP300; which activates transcriptional capacity. Lysine residues that are sumoylated also seem to be target for acetylation. In terms of tissue distribution, expressed in fetal tissues such as lung, liver and kidney. Not detected or weak detection in normal adult tissues, but highly expressed in salivary gland with benign or malignant pleiomorphic adenomas with or without 8q12 aberrations, with preferential occurrence in benign tumors.

It is found in the nucleus. Its function is as follows. Transcription factor whose activation results in up-regulation of target genes, such as IGFII, leading to uncontrolled cell proliferation: when overexpressed in cultured cells, higher proliferation rate and transformation are observed. Other target genes such as CRLF1, CRABP2, CRIP2, PIGF are strongly induced in cells with PLAG1 induction. Proto-oncogene whose ectopic expression can trigger the development of pleomorphic adenomas of the salivary gland and lipoblastomas. Overexpression is associated with up-regulation of IGFII, is frequently observed in hepatoblastoma, common primary liver tumor in childhood. Cooperates with CBFB-MYH11, a fusion gene important for myeloid leukemia. This Homo sapiens (Human) protein is Zinc finger protein PLAG1 (PLAG1).